Consider the following 238-residue polypeptide: MGHRITTQNRGRGGPTYRAPSHRYKAALKHIGDGTKSISGSIIDIEHDPARNAPIALVQLEDGSKVYILVTEGIGIGETVAWGADVKVKNGNTLPLQSIPTGSYICNIESRPNDGGKFVRSTGVQAVVVDKIGDRIGVRMPSGKTKWFNARCRATVGIVAGGGRVEKPFVKAGNKSHKMRNTASNWPRVRGVAMNVIDHPFGGGGHQHPGRPKTIARGTSPGRTVGHVAARQTGRSRK.

The segment at Phe-201–Lys-238 is disordered.

This sequence belongs to the universal ribosomal protein uL2 family. In terms of assembly, part of the 50S ribosomal subunit. Forms a bridge to the 30S subunit in the 70S ribosome.

In terms of biological role, one of the primary rRNA binding proteins. Required for association of the 30S and 50S subunits to form the 70S ribosome, for tRNA binding and peptide bond formation. It has been suggested to have peptidyltransferase activity; this is somewhat controversial. Makes several contacts with the 16S rRNA in the 70S ribosome. This Methanoregula boonei (strain DSM 21154 / JCM 14090 / 6A8) protein is Large ribosomal subunit protein uL2.